We begin with the raw amino-acid sequence, 944 residues long: Probable tape measure protein (944 aa).

Residues 13-52 (RMRDEASRTLRQVRDATRALQNQTNSTSQAQERLQEQFRK) are a coiled coil.

It belongs to the P2likevirus tape measure protein family.

Functionally, serves as a base for tail tube protein polymerization and acts as a template for tail length determination. The polypeptide is Probable tape measure protein (Clostridioides difficile (Peptoclostridium difficile)).